A 216-amino-acid chain; its full sequence is Thiamine-phosphate synthase (216 aa).

4-amino-2-methyl-5-(diphosphooxymethyl)pyrimidine is bound by residues Gln-40 to Lys-44 and Asn-72. Residues Asp-73 and Asp-92 each contribute to the Mg(2+) site. Residue Ser-111 coordinates 4-amino-2-methyl-5-(diphosphooxymethyl)pyrimidine. Position 137–139 (Thr-137–Thr-139) interacts with 2-[(2R,5Z)-2-carboxy-4-methylthiazol-5(2H)-ylidene]ethyl phosphate. Lys-140 provides a ligand contact to 4-amino-2-methyl-5-(diphosphooxymethyl)pyrimidine. 2-[(2R,5Z)-2-carboxy-4-methylthiazol-5(2H)-ylidene]ethyl phosphate contacts are provided by residues Gly-169 and Val-189–Ser-190.

Belongs to the thiamine-phosphate synthase family. Mg(2+) serves as cofactor.

The catalysed reaction is 2-[(2R,5Z)-2-carboxy-4-methylthiazol-5(2H)-ylidene]ethyl phosphate + 4-amino-2-methyl-5-(diphosphooxymethyl)pyrimidine + 2 H(+) = thiamine phosphate + CO2 + diphosphate. The enzyme catalyses 2-(2-carboxy-4-methylthiazol-5-yl)ethyl phosphate + 4-amino-2-methyl-5-(diphosphooxymethyl)pyrimidine + 2 H(+) = thiamine phosphate + CO2 + diphosphate. It catalyses the reaction 4-methyl-5-(2-phosphooxyethyl)-thiazole + 4-amino-2-methyl-5-(diphosphooxymethyl)pyrimidine + H(+) = thiamine phosphate + diphosphate. The protein operates within cofactor biosynthesis; thiamine diphosphate biosynthesis; thiamine phosphate from 4-amino-2-methyl-5-diphosphomethylpyrimidine and 4-methyl-5-(2-phosphoethyl)-thiazole: step 1/1. Condenses 4-methyl-5-(beta-hydroxyethyl)thiazole monophosphate (THZ-P) and 2-methyl-4-amino-5-hydroxymethyl pyrimidine pyrophosphate (HMP-PP) to form thiamine monophosphate (TMP). The polypeptide is Thiamine-phosphate synthase (Photorhabdus laumondii subsp. laumondii (strain DSM 15139 / CIP 105565 / TT01) (Photorhabdus luminescens subsp. laumondii)).